The primary structure comprises 426 residues: Phosphomethylpyrimidine synthase (426 aa).

Residues Asn65, Met94, Tyr123, His162, 184–186 (SRG), 225–228 (DGMR), and Glu264 contribute to the substrate site. His268 provides a ligand contact to Zn(2+). Tyr291 is a substrate binding site. His332 is a binding site for Zn(2+). The [4Fe-4S] cluster site is built by Cys408, Cys411, and Cys415.

It belongs to the ThiC family. [4Fe-4S] cluster serves as cofactor.

The catalysed reaction is 5-amino-1-(5-phospho-beta-D-ribosyl)imidazole + S-adenosyl-L-methionine = 4-amino-2-methyl-5-(phosphooxymethyl)pyrimidine + CO + 5'-deoxyadenosine + formate + L-methionine + 3 H(+). It participates in cofactor biosynthesis; thiamine diphosphate biosynthesis. Catalyzes the synthesis of the hydroxymethylpyrimidine phosphate (HMP-P) moiety of thiamine from aminoimidazole ribotide (AIR) in a radical S-adenosyl-L-methionine (SAM)-dependent reaction. The chain is Phosphomethylpyrimidine synthase from Methanococcus vannielii (strain ATCC 35089 / DSM 1224 / JCM 13029 / OCM 148 / SB).